The chain runs to 166 residues: Sec-independent protein translocase protein TatB (166 aa).

The chain crosses the membrane as a helical span at residues 2–22 (FDGIGFMELLLIGVLGLVVLG). The interval 69–166 (SKGLSNLSPE…DTRSNPKANG (98 aa)) is disordered. Composition is skewed to polar residues over residues 88-97 (QAAQSVNRPY) and 112-132 (QIYS…SQAN). Positions 133–153 (PTATVEASPAPASPATPSEPS) are enriched in low complexity. Residues 155 to 166 (GADTRSNPKANG) show a composition bias toward polar residues.

It belongs to the TatB family. In terms of assembly, the Tat system comprises two distinct complexes: a TatABC complex, containing multiple copies of TatA, TatB and TatC subunits, and a separate TatA complex, containing only TatA subunits. Substrates initially bind to the TatABC complex, which probably triggers association of the separate TatA complex to form the active translocon.

It localises to the cell inner membrane. Part of the twin-arginine translocation (Tat) system that transports large folded proteins containing a characteristic twin-arginine motif in their signal peptide across membranes. Together with TatC, TatB is part of a receptor directly interacting with Tat signal peptides. TatB may form an oligomeric binding site that transiently accommodates folded Tat precursor proteins before their translocation. The chain is Sec-independent protein translocase protein TatB from Shewanella baltica (strain OS155 / ATCC BAA-1091).